The sequence spans 360 residues: tRNA N6-adenosine threonylcarbamoyltransferase (360 aa).

The Fe cation site is built by histidine 115 and histidine 119. Substrate is bound by residues 137 to 141 (LVSGG), aspartate 170, glycine 183, and asparagine 283. Aspartate 311 contacts Fe cation.

It belongs to the KAE1 / TsaD family. Fe(2+) serves as cofactor.

The protein resides in the cytoplasm. The catalysed reaction is L-threonylcarbamoyladenylate + adenosine(37) in tRNA = N(6)-L-threonylcarbamoyladenosine(37) in tRNA + AMP + H(+). Required for the formation of a threonylcarbamoyl group on adenosine at position 37 (t(6)A37) in tRNAs that read codons beginning with adenine. Is involved in the transfer of the threonylcarbamoyl moiety of threonylcarbamoyl-AMP (TC-AMP) to the N6 group of A37, together with TsaE and TsaB. TsaD likely plays a direct catalytic role in this reaction. This Sinorhizobium medicae (strain WSM419) (Ensifer medicae) protein is tRNA N6-adenosine threonylcarbamoyltransferase.